Consider the following 310-residue polypeptide: HTH-type transcriptional regulator CbbR (310 aa).

The 58-residue stretch at I7–T64 folds into the HTH lysR-type domain. Residues L24 to R43 constitute a DNA-binding region (H-T-H motif).

Belongs to the LysR transcriptional regulatory family.

Functionally, transcriptional activator for the cbb operon for RuBisCO and other Calvin cycle genes. This chain is HTH-type transcriptional regulator CbbR (cbbR), found in Cereibacter sphaeroides (Rhodobacter sphaeroides).